The sequence spans 259 residues: Gem-associated protein 2 (259 aa).

This sequence belongs to the gemin-2 family. As to quaternary structure, forms a stable heteromeric complex with survival of motor neuron protein (SMN), GEMIN3 and GEMIN4. The SMN complex is associated with the spliceosomal snRNAs U1 and U5 in the cytoplasm of oocytes.

The protein resides in the nucleus. It is found in the gem. Its subcellular location is the cytoplasm. Functionally, the SMN complex catalyzes the assembly of small nuclear ribonucleoproteins (snRNPs), the building blocks of the spliceosome, and thereby plays an important role in the splicing of cellular pre-mRNAs. Most spliceosomal snRNPs contain a common set of Sm proteins SNRPB, SNRPD1, SNRPD2, SNRPD3, SNRPE, SNRPF and SNRPG that assemble in a heptameric protein ring on the Sm site of the small nuclear RNA to form the core snRNP (Sm core). In the cytosol, the Sm proteins SNRPD1, SNRPD2, SNRPE, SNRPF and SNRPG (5Sm) are trapped in an inactive 6S pICln-Sm complex by the chaperone CLNS1A that controls the assembly of the core snRNP. To assemble core snRNPs, the SMN complex accepts the trapped 5Sm proteins from CLNS1A. Binding of snRNA inside 5Sm ultimately triggers eviction of the SMN complex, thereby allowing binding of SNRPD3 and SNRPB to complete assembly of the core snRNP. Within the SMN complex, GEMIN2 constrains the conformation of 5Sm, thereby promoting 5Sm binding to snRNA containing the snRNP code (a nonameric Sm site and a 3'-adjacent stem-loop), thus preventing progression of assembly until a cognate substrate is bound. This is Gem-associated protein 2 (gemin2) from Xenopus laevis (African clawed frog).